Consider the following 82-residue polypeptide: Chlorosome protein E (82 aa).

H26 is an a bacteriochlorophyll c binding site. Positions 55-82 (GSSGLKGSSPKYSGYATPSKEVKSRFEK) are disordered. Residues 59–69 (LKGSSPKYSGY) are compositionally biased toward low complexity.

Belongs to the BChl C/E-binding protein family.

It is found in the chlorosome. It localises to the chlorosome envelope. Component of the photosynthetic apparatus. The light harvesting B740 complex binds bacteriochlorophyll c. The chain is Chlorosome protein E (csmE) from Chlorobaculum tepidum (strain ATCC 49652 / DSM 12025 / NBRC 103806 / TLS) (Chlorobium tepidum).